The sequence spans 583 residues: Afadin- and alpha-actinin-binding protein (583 aa).

Coiled-coil stretches lie at residues 108-220 (NNVE…LAIE), 255-333 (DYEA…QLTN), and 420-453 (EEKERLKEEWRLFDEQKRNFEKERKNFTEAAIRL). The interval 285–328 (LSPCPPLNRGGSAEESQELGDSDREERSAETSRETLDQSCEHAR) is disordered. Residues 305-328 (DSDREERSAETSRETLDQSCEHAR) are compositionally biased toward basic and acidic residues. The disordered stretch occupies residues 480 to 527 (DRMRSSSSDGQSALSVKSEPEIRTSSSKAPPVKSSAYTTFSTPKSSKS). Residues 484–494 (SSSSDGQSALS) are compositionally biased toward polar residues. The segment covering 504–515 (SSSKAPPVKSSA) has biased composition (low complexity). Residues 516 to 527 (YTTFSTPKSSKS) are compositionally biased toward polar residues.

It belongs to the ADIP family.

It localises to the cell junction. It is found in the adherens junction. The protein localises to the cytoplasm. Its subcellular location is the cytoskeleton. The protein resides in the microtubule organizing center. It localises to the centrosome. It is found in the centriolar satellite. Its function is as follows. Belongs to an adhesion system, which plays a role in the organization of homotypic, interneuronal and heterotypic cell-cell adherens junctions (AJs). Involved in cell movement. Acts as a centrosome maturation factor, probably by maintaining the integrity of the pericentriolar material and proper microtubule nucleation at mitotic spindle poles. The protein is Afadin- and alpha-actinin-binding protein (ssx2ip) of Oryzias latipes (Japanese rice fish).